The primary structure comprises 199 residues: Glycerol-3-phosphate acyltransferase (199 aa).

5 helical membrane passes run 5-25 (AFLV…VALV), 51-71 (KLGV…VLCA), 79-99 (VFLS…VFLY), 112-132 (VFLG…VAVI), and 153-173 (CAWL…GLVI).

The protein belongs to the PlsY family. Probably interacts with PlsX.

Its subcellular location is the cell inner membrane. The enzyme catalyses an acyl phosphate + sn-glycerol 3-phosphate = a 1-acyl-sn-glycero-3-phosphate + phosphate. It participates in lipid metabolism; phospholipid metabolism. Its function is as follows. Catalyzes the transfer of an acyl group from acyl-phosphate (acyl-PO(4)) to glycerol-3-phosphate (G3P) to form lysophosphatidic acid (LPA). This enzyme utilizes acyl-phosphate as fatty acyl donor, but not acyl-CoA or acyl-ACP. The protein is Glycerol-3-phosphate acyltransferase of Solidesulfovibrio magneticus (strain ATCC 700980 / DSM 13731 / RS-1) (Desulfovibrio magneticus).